We begin with the raw amino-acid sequence, 97 residues long: Large ribosomal subunit protein bL28 (97 aa).

Belongs to the bacterial ribosomal protein bL28 family.

This Bartonella quintana (strain Toulouse) (Rochalimaea quintana) protein is Large ribosomal subunit protein bL28.